Consider the following 247-residue polypeptide: Fibroblast growth factor 14 (247 aa).

2 disordered regions span residues methionine 1 to arginine 37 and glutamate 216 to threonine 247. Over residues glutamine 15–serine 25 the composition is skewed to basic and acidic residues.

It belongs to the heparin-binding growth factors family. As to quaternary structure, interacts with SCN8A. In terms of tissue distribution, brain and testis; widely distributed in the developing nervous system. In adult, high levels in the granular layer of the cerebellum, less in hippocampus and olfactory bulb.

The protein resides in the nucleus. Functionally, probably involved in nervous system development and function. This Mus musculus (Mouse) protein is Fibroblast growth factor 14 (Fgf14).